The following is a 623-amino-acid chain: MSSPVPGLMLPEKRVVEVRNLSVYFEQQGQRTDAVRNLTFSVDRGETLAIVGESGSGKSVTSLALMRLVEHAGGVIHQGDMLFRRRDGQVLDLRGARQRVMRTLRGADLAMIFQEPMTSLNPVFPVGEQIAESIRLHQRMDRRAARAETLRMLDLVRIPEARNVLDRYPHQLSGGMRQRVMIAMALSCKPSLLIADEPTTALDVTIQAQILQLIRVLQREMDMAVIFITHDMGVVAEVAERVLVMHRGESVEAASVGQIFAAPQHPYTQGLLAAVPALGSMRGQPFPAKFPLLDQNTARIVDNVPQDTVPAHAEPILQVSNLVTRFPIRSGLLNRVTRQVHAVEKVSFDLWPGETLSLVGESGCGKSTTGRALLQLVESQKGDITFDGQRIHQLKGAALQHLRRDIQLIFQDPYASLDPRLTVGFSIMEPLLVHNVCRRQEAEKRVAWLLSRVGLEPEHARRYPHEFSGGQRQRVCIARALALNPKVVIADEAVSALDVSIQAQIINLMLELQREFGIAFLFISHDMAVVERISHRVAVMYMGQIVEIGPRQDVFERPQHPYTRKLMSAVPVADPSRRQREQVLLVDEIPSPIRAIGDEPTTAPLVQVGKRHFVAHHPIAGAY.

ABC transporter domains follow at residues 18 to 272 (VRNL…QGLL) and 317 to 567 (LQVS…RKLM). Residues 52-59 (GESGSGKS) and 360-367 (GESGCGKS) contribute to the ATP site.

The protein belongs to the ABC transporter superfamily. Glutathione importer (TC 3.A.1.5.11) family. In terms of assembly, the complex is composed of two ATP-binding proteins (GsiA), two transmembrane proteins (GsiC and GsiD) and a solute-binding protein (GsiB).

It localises to the cell inner membrane. It catalyses the reaction glutathione(out) + ATP + H2O = glutathione(in) + ADP + phosphate + H(+). In terms of biological role, part of the ABC transporter complex GsiABCD involved in glutathione import. Responsible for energy coupling to the transport system. In Pectobacterium atrosepticum (strain SCRI 1043 / ATCC BAA-672) (Erwinia carotovora subsp. atroseptica), this protein is Glutathione import ATP-binding protein GsiA.